Consider the following 333-residue polypeptide: D-fructose 1,6-bisphosphatase class 2/sedoheptulose 1,7-bisphosphatase (333 aa).

Mn(2+)-binding residues include Asp33, Glu57, Asp85, and Glu88. Residues 88-90, Tyr119, 164-166, and 186-188 contribute to the substrate site; these read EGT, RAR, and DGD. Position 213 (Glu213) interacts with Mn(2+).

Belongs to the FBPase class 2 family. Homotetramer. Requires Mn(2+) as cofactor.

It catalyses the reaction beta-D-fructose 1,6-bisphosphate + H2O = beta-D-fructose 6-phosphate + phosphate. The enzyme catalyses D-sedoheptulose 1,7-bisphosphate + H2O = D-sedoheptulose 7-phosphate + phosphate. The protein operates within carbohydrate biosynthesis; Calvin cycle. Its function is as follows. Catalyzes the hydrolysis of fructose 1,6-bisphosphate (Fru 1,6-P2) and sedoheptulose 1,7-bisphosphate (Sed 1,7-P2) to fructose 6-phosphate and sedoheptulose 7-phosphate, respectively. This Prochlorococcus marinus subsp. pastoris (strain CCMP1986 / NIES-2087 / MED4) protein is D-fructose 1,6-bisphosphatase class 2/sedoheptulose 1,7-bisphosphatase.